The following is a 377-amino-acid chain: Succinyl-diaminopimelate desuccinylase (377 aa).

His66 provides a ligand contact to Zn(2+). The active site involves Asp68. Residue Asp99 coordinates Zn(2+). Glu133 acts as the Proton acceptor in catalysis. The Zn(2+) site is built by Glu134, Glu162, and His348.

It belongs to the peptidase M20A family. DapE subfamily. In terms of assembly, homodimer. Requires Zn(2+) as cofactor. The cofactor is Co(2+).

It carries out the reaction N-succinyl-(2S,6S)-2,6-diaminopimelate + H2O = (2S,6S)-2,6-diaminopimelate + succinate. It participates in amino-acid biosynthesis; L-lysine biosynthesis via DAP pathway; LL-2,6-diaminopimelate from (S)-tetrahydrodipicolinate (succinylase route): step 3/3. Functionally, catalyzes the hydrolysis of N-succinyl-L,L-diaminopimelic acid (SDAP), forming succinate and LL-2,6-diaminopimelate (DAP), an intermediate involved in the bacterial biosynthesis of lysine and meso-diaminopimelic acid, an essential component of bacterial cell walls. The sequence is that of Succinyl-diaminopimelate desuccinylase from Xylella fastidiosa (strain 9a5c).